We begin with the raw amino-acid sequence, 160 residues long: Peptide methionine sulfoxide reductase MsrA (160 aa).

Cysteine 11 is a catalytic residue.

The protein belongs to the MsrA Met sulfoxide reductase family.

The catalysed reaction is L-methionyl-[protein] + [thioredoxin]-disulfide + H2O = L-methionyl-(S)-S-oxide-[protein] + [thioredoxin]-dithiol. It carries out the reaction [thioredoxin]-disulfide + L-methionine + H2O = L-methionine (S)-S-oxide + [thioredoxin]-dithiol. Its function is as follows. Has an important function as a repair enzyme for proteins that have been inactivated by oxidation. Catalyzes the reversible oxidation-reduction of methionine sulfoxide in proteins to methionine. The sequence is that of Peptide methionine sulfoxide reductase MsrA from Malacoplasma penetrans (strain HF-2) (Mycoplasma penetrans).